The chain runs to 811 residues: U-box domain-containing protein 43 (811 aa).

Residues 24–103 enclose the U-box domain; it reads NIYEAFICPL…EEWRARNDAL (80 aa). 9 ARM repeats span residues 136-175, 178-217, 220-261, 263-302, 303-342, 344-388, 399-438, 444-484, and 489-528; these read RKIR…VVVE, EESK…ELSK, ALCE…NLER, EENV…VLAL, NNDV…NISS, EGSA…NIVN, GPHH…GLTS, INVV…NISP, and ELAN…LLAE.

It catalyses the reaction S-ubiquitinyl-[E2 ubiquitin-conjugating enzyme]-L-cysteine + [acceptor protein]-L-lysine = [E2 ubiquitin-conjugating enzyme]-L-cysteine + N(6)-ubiquitinyl-[acceptor protein]-L-lysine.. The protein operates within protein modification; protein ubiquitination. Functions as an E3 ubiquitin ligase. This chain is U-box domain-containing protein 43 (PUB43), found in Arabidopsis thaliana (Mouse-ear cress).